A 118-amino-acid chain; its full sequence is Ribonuclease P protein component (118 aa).

It belongs to the RnpA family. Consists of a catalytic RNA component (M1 or rnpB) and a protein subunit.

It carries out the reaction Endonucleolytic cleavage of RNA, removing 5'-extranucleotides from tRNA precursor.. Functionally, RNaseP catalyzes the removal of the 5'-leader sequence from pre-tRNA to produce the mature 5'-terminus. It can also cleave other RNA substrates such as 4.5S RNA. The protein component plays an auxiliary but essential role in vivo by binding to the 5'-leader sequence and broadening the substrate specificity of the ribozyme. The sequence is that of Ribonuclease P protein component from Shewanella baltica (strain OS155 / ATCC BAA-1091).